We begin with the raw amino-acid sequence, 438 residues long: MNTADTRQRLLDIEKQIASLREEQATVKAQWEAEKELIHTSRRLKEELEDLRVQAENYERSGDYGKVAEIRYGKIAEIEKALEENNRKIEARQASGDLIMKEEIDAGDIADIVSRWTGIPVSKMLQSERQKLLGIESELHRRVVGQDEAVRAVSDAVKRSRAGMGDEKRPIGSFIFLGPTGVGKTELARTLAEYLFDDEDALIRIDMSEYMEAHTVSRLVGAPPGYVGYEEGGQLTEAVRRKPFSVVLLDEIEKAHPDVFNILLQILDDGRLTDSKGRTVNFKNTIIIMTSNIGAQLIQSEMEHLEGRDADAALAGLKEKLFQLLKQQVRPEFLNRIDEVILFTPLTRENLREIVTIQFNRIKETARRQRITLEISDEALMWLAKTGFDPAFGARPLKRVMQRQITNRLSEMILAGQVGEDDTVEIGLENDAIVMKKK.

A coiled-coil region spans residues 1-94 (MNTADTRQRL…NNRKIEARQA (94 aa)). Positions 1 to 118 (MNTADTRQRL…IADIVSRWTG (118 aa)) are linker. Positions 128–345 (ERQKLLGIES…RIDEVILFTP (218 aa)) are NBD2. 178 to 185 (GPTGVGKT) is a binding site for ATP. A C-terminal region spans residues 346–438 (LTRENLREIV…ENDAIVMKKK (93 aa)).

It belongs to the ClpA/ClpB family. Homohexamer. The oligomerization is ATP-dependent.

Its subcellular location is the cytoplasm. Part of a stress-induced multi-chaperone system, it is involved in the recovery of the cell from heat-induced damage, in cooperation with DnaK, DnaJ and GrpE. Acts before DnaK, in the processing of protein aggregates. Protein binding stimulates the ATPase activity; ATP hydrolysis unfolds the denatured protein aggregates, which probably helps expose new hydrophobic binding sites on the surface of ClpB-bound aggregates, contributing to the solubilization and refolding of denatured protein aggregates by DnaK. In Chlorobaculum tepidum (strain ATCC 49652 / DSM 12025 / NBRC 103806 / TLS) (Chlorobium tepidum), this protein is Probable chaperone protein ClpB 1 (clpB1).